A 135-amino-acid polypeptide reads, in one-letter code: Interleukin-4 (135 aa).

The N-terminal stretch at 1 to 24 (MGLTSQLIPALVCLLVCTSHFVHG) is a signal peptide. 3 disulfides stabilise this stretch: cysteine 27–cysteine 135, cysteine 48–cysteine 85, and cysteine 70–cysteine 105. 2 N-linked (GlcNAc...) asparagine glycosylation sites follow: asparagine 62 and asparagine 96.

This sequence belongs to the IL-4/IL-13 family.

The protein localises to the secreted. Its function is as follows. Participates in at least several B-cell activation processes as well as of other cell types. It is a costimulator of DNA-synthesis. It induces the expression of class II MHC molecules on resting B-cells. It enhances both secretion and cell surface expression of IgE and IgG1. It also regulates the expression of the low affinity Fc receptor for IgE (CD23) on both lymphocytes and monocytes. Positively regulates IL31RA expression in macrophages. Stimulates autophagy in dendritic cells by interfering with mTORC1 signaling and through the induction of RUFY4. The chain is Interleukin-4 (IL4) from Capra hircus (Goat).